We begin with the raw amino-acid sequence, 103 residues long: Histone H4 (103 aa).

The span at 1-14 (MSGRGKGGKGLGKG) shows a compositional bias: gly residues. Residues 1–20 (MSGRGKGGKGLGKGGAKRHR) form a disordered region. The DNA-binding element occupies 17–21 (KRHRK).

The protein belongs to the histone H4 family. As to quaternary structure, the nucleosome is a histone octamer containing two molecules each of H2A, H2B, H3 and H4 assembled in one H3-H4 heterotetramer and two H2A-H2B heterodimers. The octamer wraps approximately 147 bp of DNA.

The protein resides in the nucleus. It is found in the chromosome. Core component of nucleosome. Nucleosomes wrap and compact DNA into chromatin, limiting DNA accessibility to the cellular machineries which require DNA as a template. Histones thereby play a central role in transcription regulation, DNA repair, DNA replication and chromosomal stability. DNA accessibility is regulated via a complex set of post-translational modifications of histones, also called histone code, and nucleosome remodeling. This Physarum polycephalum (Slime mold) protein is Histone H4 (H41).